A 438-amino-acid chain; its full sequence is Succinyl-CoA:glutarate CoA-transferase (438 aa).

Residues 1–31 (MLATLARVAALRRTCLFSGRGGGRGLWTGRP) constitute a mitochondrion transit peptide. The active-site Nucleophile is the aspartate 205. Position 394 is an N6-acetyllysine (lysine 394).

It belongs to the CoA-transferase III family. Highly expressed in kidney. Intermediate expression in liver, skeletal muscle and pancreas. Little to no expression detected in other tissues examined.

Its subcellular location is the mitochondrion. It catalyses the reaction glutarate + succinyl-CoA = glutaryl-CoA + succinate. The catalysed reaction is 3-hydroxy-3-methylglutarate + succinyl-CoA = (3S)-3-hydroxy-3-methylglutaryl-CoA + succinate. The enzyme catalyses 3-hydroxy-3-methylglutarate + glutaryl-CoA = (3S)-3-hydroxy-3-methylglutaryl-CoA + glutarate. It carries out the reaction hexanedioate + glutaryl-CoA = hexanedioyl-CoA + glutarate. It catalyses the reaction itaconate + glutaryl-CoA = itaconyl-CoA + glutarate. The catalysed reaction is itaconate + succinyl-CoA = itaconyl-CoA + succinate. Its activity is regulated as follows. Inhibited by valsartan and losartan carboxylate. Functionally, coenzyme A (CoA) transferase that reversibly catalyzes the transfer of a CoA moiety from a dicarboxyl-CoA to a dicarboxylate in a metabolite recycling process. Displays preference for succinyl-CoA and glutarate-CoA as dicarboxyl-CoA donors and glutarate, succinate, adipate/hexanedioate, itaconate and 3-hydroxy-3-methylglutarate as dicarboxylate acceptors. Acts on intermediates or end products of lysine and tryptophan degradation pathway, in particular catalyzes succinyl-CoA-dependent reesterification of free glutarate into glutaryl-CoA to prevent renal excretion of glutarate. Upon inflammation, may convert macrophage-derived itaconate to itaconyl-CoA in erythroid precursors where it negatively regulates the TCA cycle and heme synthesis to limit erythroid differentiation in the context of stress erythropoiesis. This Homo sapiens (Human) protein is Succinyl-CoA:glutarate CoA-transferase.